We begin with the raw amino-acid sequence, 274 residues long: Syntaxin-12 (274 aa).

Disordered stretches follow at residues methionine 1–arginine 20 and glutamate 128–glutamine 147. At serine 2 the chain carries N-acetylserine. Topologically, residues serine 2 to lysine 250 are cytoplasmic. A coiled-coil region spans residues isoleucine 33–glutamate 130. A phosphoserine mark is found at serine 139, serine 142, serine 218, and serine 225. The region spanning leucine 178–alanine 240 is the t-SNARE coiled-coil homology domain. The helical; Anchor for type IV membrane protein transmembrane segment at methionine 251–valine 271 threads the bilayer. Residues alanine 272–lysine 274 are Vesicular-facing.

Belongs to the syntaxin family. Associates with the BLOC-1 complex. Interacts with BLOC1S6. Interacts with NAPA and SNAP23. Identified in a complex containing STX6, STX12, VAMP4 and VTI1A. Interacts with GRIPAP1. Forms a complex with GRIP1, GRIA2 and NSG1; controls the intracellular fate of AMPAR and the endosomal sorting of the GRIA2 subunit toward recycling and membrane targeting. Interacts with NSG1. Interacts with TPC1. Interacts (via N-terminus) with VPS13B.

It localises to the endosome membrane. Its subcellular location is the golgi apparatus membrane. The protein localises to the endomembrane system. The protein resides in the early endosome membrane. It is found in the recycling endosome membrane. In terms of biological role, SNARE promoting fusion of transport vesicles with target membranes. Together with SNARE STX6, promotes movement of vesicles from endosomes to the cell membrane, and may therefore function in the endocytic recycling pathway. Through complex formation with GRIP1, GRIA2 and NSG1 controls the intracellular fate of AMPAR and the endosomal sorting of the GRIA2 subunit toward recycling and membrane targeting. The sequence is that of Syntaxin-12 (Stx12) from Mus musculus (Mouse).